The following is a 243-amino-acid chain: Pyridoxine 5'-phosphate synthase (243 aa).

A 3-amino-2-oxopropyl phosphate-binding site is contributed by N9. 11 to 12 (DH) serves as a coordination point for 1-deoxy-D-xylulose 5-phosphate. R20 lines the 3-amino-2-oxopropyl phosphate pocket. The active-site Proton acceptor is H45. Residues R47 and H52 each contribute to the 1-deoxy-D-xylulose 5-phosphate site. Residue E72 is the Proton acceptor of the active site. T102 is a binding site for 1-deoxy-D-xylulose 5-phosphate. H193 serves as the catalytic Proton donor. 3-amino-2-oxopropyl phosphate contacts are provided by residues G194 and 215–216 (GH).

Belongs to the PNP synthase family. In terms of assembly, homooctamer; tetramer of dimers.

The protein localises to the cytoplasm. It catalyses the reaction 3-amino-2-oxopropyl phosphate + 1-deoxy-D-xylulose 5-phosphate = pyridoxine 5'-phosphate + phosphate + 2 H2O + H(+). The protein operates within cofactor biosynthesis; pyridoxine 5'-phosphate biosynthesis; pyridoxine 5'-phosphate from D-erythrose 4-phosphate: step 5/5. In terms of biological role, catalyzes the complicated ring closure reaction between the two acyclic compounds 1-deoxy-D-xylulose-5-phosphate (DXP) and 3-amino-2-oxopropyl phosphate (1-amino-acetone-3-phosphate or AAP) to form pyridoxine 5'-phosphate (PNP) and inorganic phosphate. In Salmonella paratyphi A (strain ATCC 9150 / SARB42), this protein is Pyridoxine 5'-phosphate synthase.